A 735-amino-acid polypeptide reads, in one-letter code: Cyclic nucleotide-gated channel cone photoreceptor subunit alpha (735 aa).

Residues 1–214 are Cytoplasmic-facing; sequence MAKINTQHSY…PSSNMYYNWL (214 aa). The disordered stretch occupies residues 142–191; sequence VNFSNNTNEDKKEEKKEVKEEKKEEKKEEKKEEKKDDKKDDKKDDKKDDK. The span at 149-191 shows a compositional bias: basic and acidic residues; the sequence is NEDKKEEKKEVKEEKKEEKKEEKKEEKKDDKKDDKKDDKKDDK. Residues 215–236 form a helical membrane-spanning segment; the sequence is TIIAAPVFYNWCMLICRACFDE. At 237 to 246 the chain is on the extracellular side; it reads LQIDHIKLWL. A helical membrane pass occupies residues 247-267; it reads FLDYCSDIIYVFDMFVRFRTG. Over 268 to 292 the chain is Cytoplasmic; it reads FLEQGLLVKDEKKLRDHYTQTVQFK. A helical membrane pass occupies residues 293 to 311; it reads LDVLSLLPTDLAYLKLGLN. Over 312-316 the chain is Extracellular; that stretch reads YPELR. The chain crosses the membrane as a helical span at residues 317–335; that stretch reads FNRLLRIARLFEFFDRTET. The Cytoplasmic segment spans residues 336–342; sequence RTNYPNM. Residues 343 to 366 form a helical membrane-spanning segment; it reads FRIGNLVLYILIIIHWNACIYFAI. Residues 367 to 389 lie on the Extracellular side of the membrane; the sequence is SKVIGFGTDSWVYPNVSIPEYGR. Transmembrane regions (helical) follow at residues 390 to 424 and 425 to 449; these read LSRK…LFVV and IDFL…SNMN. Over 450–735 the chain is Cytoplasmic; it reads ASRAEFQAKV…PEKPEEQKKD (286 aa). 3',5'-cyclic GMP-binding positions include 532–654, Glu-591, and Arg-606; that span reads LLIE…DNLI. The disordered stretch occupies residues 715–735; that stretch reads GSGSLSVGEPEPEKPEEQKKD. Basic and acidic residues predominate over residues 725–735; it reads EPEKPEEQKKD.

The protein belongs to the cyclic nucleotide-gated cation channel (TC 1.A.1.5) family.

It localises to the membrane. Visual signal transduction is mediated by a G-protein coupled cascade using cGMP as second messenger. This protein can be activated by cyclic GMP which leads to an opening of the cation channel and thereby causing a depolarization of cone photoreceptors. The polypeptide is Cyclic nucleotide-gated channel cone photoreceptor subunit alpha (Gallus gallus (Chicken)).